Here is a 156-residue protein sequence, read N- to C-terminus: MNFGATFWGPMISFALFVWFTMKYVWPPIQTAMADRQKQIADGLAAGERGQKELDQAKSEVDKMLREAREQASQVIAQANKRQSELVEQAREEARQEAERVLAQARSEIDTEISQARDALRKEVVNLAVAGSSRILKREIDAKAHKDLIDDLVKQL.

Residues 4 to 26 form a helical membrane-spanning segment; sequence GATFWGPMISFALFVWFTMKYVW.

The protein belongs to the ATPase B chain family. F-type ATPases have 2 components, F(1) - the catalytic core - and F(0) - the membrane proton channel. F(1) has five subunits: alpha(3), beta(3), gamma(1), delta(1), epsilon(1). F(0) has three main subunits: a(1), b(2) and c(10-14). The alpha and beta chains form an alternating ring which encloses part of the gamma chain. F(1) is attached to F(0) by a central stalk formed by the gamma and epsilon chains, while a peripheral stalk is formed by the delta and b chains.

It localises to the cell inner membrane. In terms of biological role, f(1)F(0) ATP synthase produces ATP from ADP in the presence of a proton or sodium gradient. F-type ATPases consist of two structural domains, F(1) containing the extramembraneous catalytic core and F(0) containing the membrane proton channel, linked together by a central stalk and a peripheral stalk. During catalysis, ATP synthesis in the catalytic domain of F(1) is coupled via a rotary mechanism of the central stalk subunits to proton translocation. Its function is as follows. Component of the F(0) channel, it forms part of the peripheral stalk, linking F(1) to F(0). In Alkalilimnicola ehrlichii (strain ATCC BAA-1101 / DSM 17681 / MLHE-1), this protein is ATP synthase subunit b.